A 447-amino-acid chain; its full sequence is MTRTVHVIGGGLAGSEAAWQLAQADIPVILHEMRPVRTTPAHQTDGLAELVCSNSLRSDDADYNAVGLLHEEMRRAGSLILAQADAHKVPAGGALAVDRDGFSQGVQAALAGHPRITILREEVAGLPPEDWEQVVIATGPLTSPAMAEALRGMTGEDSLAFFDAIAPIVTKDSIDFGKAWFQSRYDKGTGSDYINCPLDREQYNTFIDALITGEKVDFHEWEKDTPYFEGCLPIEVMAERGKDTLAYGPMKPVGLTNPNGPKPFAVVQLRQDNALGTLYNLVGFQTKLRHGEQARIFRAIPGLENAEFARLGGLHRNTFINGPRVLDRTLRLKAQPRLRLAGQVTGCEGYVESSAIGLLAGLFAAAEALGRDMLRPPATTALGALLNHVTGDAEAETYQPMNINFGLFPPPPERDERGRRVKGRDRKKLYAQRAREALTPWLNTIRE.

9–14 (GGGLAG) lines the FAD pocket.

It belongs to the MnmG family. TrmFO subfamily. Requires FAD as cofactor.

The protein localises to the cytoplasm. The catalysed reaction is uridine(54) in tRNA + (6R)-5,10-methylene-5,6,7,8-tetrahydrofolate + NADH + H(+) = 5-methyluridine(54) in tRNA + (6S)-5,6,7,8-tetrahydrofolate + NAD(+). It carries out the reaction uridine(54) in tRNA + (6R)-5,10-methylene-5,6,7,8-tetrahydrofolate + NADPH + H(+) = 5-methyluridine(54) in tRNA + (6S)-5,6,7,8-tetrahydrofolate + NADP(+). Its function is as follows. Catalyzes the folate-dependent formation of 5-methyl-uridine at position 54 (M-5-U54) in all tRNAs. This Paramagnetospirillum magneticum (strain ATCC 700264 / AMB-1) (Magnetospirillum magneticum) protein is Methylenetetrahydrofolate--tRNA-(uracil-5-)-methyltransferase TrmFO.